The primary structure comprises 523 residues: Major facilitator-type transporter psiT2 (523 aa).

A compositionally biased stretch (polar residues) spans 1 to 26; it reads MSLERSTSPNPTERTSLLSDTASTIS. Positions 1–45 are disordered; that stretch reads MSLERSTSPNPTERTSLLSDTASTISSRDDVEQSSLKQRRTPIPT. 5 helical membrane-spanning segments follow: residues 88 to 108, 125 to 145, 149 to 169, 175 to 195, and 221 to 241; these read FYSG…IFML, ALGI…TMML, VCAG…SELT, ALVV…GPLI, and FLPS…GYFF. An N-linked (GlcNAc...) asparagine glycan is attached at Asn269. A run of 3 helical transmembrane segments spans residues 317–337, 352–372, and 382–402; these read FLMF…FTAV, AFSV…PWVL, and HFCM…NPLA. N-linked (GlcNAc...) asparagine glycosylation occurs at Asn410. The next 3 membrane-spanning stretches (helical) occupy residues 419–439, 455–474, and 488–508; these read GLLY…VMAF, LATA…AFCP, and NILG…VGVW.

This sequence belongs to the major facilitator superfamily. TCR/Tet family.

It localises to the membrane. Major facilitator-type transporter; part of the gene cluster that mediates the biosynthesis of psilocybin, a psychotropic tryptamine-derived natural product. This chain is Major facilitator-type transporter psiT2, found in Psilocybe cubensis (Psychedelic mushroom).